The chain runs to 519 residues: Xylose import ATP-binding protein XylG (519 aa).

2 ABC transporter domains span residues 6-245 and 262-507; these read LTMR…VGRE and LEAR…LTPA. Residue 38-45 coordinates ATP; the sequence is GENGAGKS.

The protein belongs to the ABC transporter superfamily. Xylose importer (TC 3.A.1.2.4) family. The complex is composed of two ATP-binding proteins (XylG), two transmembrane proteins (XylH) and a solute-binding protein (XylF).

It localises to the cell inner membrane. It catalyses the reaction D-xylose(out) + ATP + H2O = D-xylose(in) + ADP + phosphate + H(+). Functionally, part of the ABC transporter complex XylFGH involved in xylose import. Responsible for energy coupling to the transport system. The chain is Xylose import ATP-binding protein XylG from Burkholderia ambifaria (strain ATCC BAA-244 / DSM 16087 / CCUG 44356 / LMG 19182 / AMMD) (Burkholderia cepacia (strain AMMD)).